The primary structure comprises 290 residues: Enoyl-CoA hydratase, mitochondrial (290 aa).

Residues 1 to 27 (MAALRALLPRACSSLLSSVRCPELRRF) constitute a mitochondrion transit peptide. 98–101 (ADIK) provides a ligand contact to substrate. Lys101 is modified (N6-acetyllysine; alternate). Lys101 bears the N6-succinyllysine; alternate mark. Residue Ser114 is modified to Phosphoserine. At Lys115 the chain carries N6-acetyllysine; alternate. N6-succinyllysine; alternate is present on Lys115. Residue Gly141 coordinates substrate. Residue Lys204 is modified to N6-succinyllysine. At Lys211 the chain carries N6-acetyllysine. Position 217 is an N6-acetyllysine; alternate (Lys217). Lys217 is subject to N6-succinyllysine; alternate.

It belongs to the enoyl-CoA hydratase/isomerase family. As to quaternary structure, homohexamer; dimer of trimers. In terms of processing, acetylation of Lys-101 is observed in liver mitochondria from fasted mice but not from fed mice.

It is found in the mitochondrion matrix. It catalyses the reaction a (3S)-3-hydroxyacyl-CoA = a (2E)-enoyl-CoA + H2O. It carries out the reaction a (3E)-enoyl-CoA = a 4-saturated (2E)-enoyl-CoA. The enzyme catalyses (3E)-hexenoyl-CoA = (2E)-hexenoyl-CoA. The catalysed reaction is (3S)-3-hydroxybutanoyl-CoA = (2E)-butenoyl-CoA + H2O. It catalyses the reaction 3-hydroxyisovaleryl-CoA = 3-methylbut-2-enoyl-CoA + H2O. It carries out the reaction 3-hydroxypropanoyl-CoA = acryloyl-CoA + H2O. The enzyme catalyses 3-hydroxybutanoyl-CoA = (2E)-butenoyl-CoA + H2O. The catalysed reaction is 2-methylpropenoyl-CoA + H2O = (S)-3-hydroxyisobutanoyl-CoA. It catalyses the reaction (3S)-hydroxyhexanoyl-CoA = (2E)-hexenoyl-CoA + H2O. It carries out the reaction (3S)-hydroxydecanoyl-CoA = (2E)-decenoyl-CoA + H2O. It functions in the pathway lipid metabolism; fatty acid beta-oxidation. Converts unsaturated trans-2-enoyl-CoA species ((2E)-enoyl-CoA) to the corresponding (3S)-3-hydroxyacyl-CoA species through addition of a water molecule to the double bond. Catalyzes the hydration of medium- and short-chained fatty enoyl-CoA thioesters from 4 carbons long (C4) up to C16. Has high substrate specificity for crotonyl-CoA ((2E)-butenoyl-CoA) and moderate specificity for acryloyl-CoA, 3-methylcrotonyl-CoA (3-methyl-(2E)-butenoyl-CoA) and methacrylyl-CoA ((2E)-2-methylpropenoyl-CoA). Can bind tiglyl-CoA (2-methylcrotonoyl-CoA), but hydrates only a small amount of this substrate. Plays a key role in the beta-oxidation spiral of short- and medium-chain fatty acid oxidation. At a lower rate than the hydratase reaction, catalyzes the isomerase reaction of trans-3-enoyl-CoA species (such as (3E)-hexenoyl-CoA) to trans-2-enoyl-CoA species (such as (2E)-hexenoyl-CoA), which are subsequently hydrated to 3(S)-3-hydroxyacyl-CoA species (such as (3S)-hydroxyhexanoyl-CoA). This Mus musculus (Mouse) protein is Enoyl-CoA hydratase, mitochondrial.